A 393-amino-acid chain; its full sequence is Pinosylvin synthase (393 aa).

57-60 is a substrate binding site; that stretch reads KFKR. Cys-167 is an active-site residue. Residues Leu-270 and 308 to 310 contribute to the substrate site; that span reads GGR.

It belongs to the thiolase-like superfamily. Chalcone/stilbene synthases family. As to quaternary structure, homodimer.

Its subcellular location is the cytoplasm. The catalysed reaction is (E)-cinnamoyl-CoA + 3 malonyl-CoA + 3 H(+) = (E)-pinosylvin + 4 CO2 + 4 CoA. It carries out the reaction 3-phenylpropanoyl-CoA + 3 malonyl-CoA + 3 H(+) = dihydropinosylvin + 4 CO2 + 4 CoA. It participates in phytoalexin biosynthesis; hydropinosylvin biosynthesis. Its function is as follows. Catalyzes the production of pinosylvin from cinnamoyl-CoA and malonyl-CoA, and dihydropinosylvin from dihydrocinnamoyl-CoA. The polypeptide is Pinosylvin synthase (Pinus sylvestris (Scotch pine)).